Here is a 1956-residue protein sequence, read N- to C-terminus: Sodium channel protein type 10 subunit alpha (1956 aa).

Residues 1–125 are Cytoplasmic-facing; sequence MEFPIGSLET…FNLIRRTAIK (125 aa). Residues 27–54 are disordered; the sequence is QIAAKQGTKKAREKHREQKDQEEKPRPQ. Residues 40-54 are compositionally biased toward basic and acidic residues; sequence KHREQKDQEEKPRPQ. The stretch at 116-405 is one I repeat; sequence FNLIRRTAIK…VTMAYEEQNQ (290 aa). A helical membrane pass occupies residues 126–149; the sequence is VSVHSWFSLFITVTILVNCVCMTR. Residues 150–154 lie on the Extracellular side of the membrane; that stretch reads TDLPE. The chain crosses the membrane as a helical span at residues 155–174; the sequence is KIEYVFTVIYTFEALIKILA. The Cytoplasmic portion of the chain corresponds to 175 to 187; sequence RGFCLNEFTYLRD. A helical membrane pass occupies residues 188-206; it reads PWNWLDFSVITLAYVGTAI. Topologically, residues 207-212 are extracellular; that stretch reads DLRGIS. The chain crosses the membrane as a helical; Voltage-sensor span at residues 213-232; sequence GLRTFRVLRALKTVSVIPGL. Residues 233–248 are Cytoplasmic-facing; that stretch reads KVIVGALIHSVKKLAD. The chain crosses the membrane as a helical span at residues 249–272; the sequence is VTILTIFCLSVFALVGLQLFKGNL. The Extracellular segment spans residues 273-341; the sequence is KNKCVKNDMA…PDFNYTSFDS (69 aa). Cysteine 276 and cysteine 319 form a disulfide bridge. N-linked (GlcNAc...) asparagine glycans are attached at residues asparagine 284, asparagine 288, asparagine 312, and asparagine 335. Positions 342–366 form an intramembrane region, pore-forming; that stretch reads FAWAFLSLFRLMTQDSWERLYQQTL. At 367–373 the chain is on the extracellular side; sequence RTSGKIY. The chain crosses the membrane as a helical span at residues 374-399; the sequence is MIFFVLVIFLGSFYLVNLILAVVTMA. Residues 400–659 are Cytoplasmic-facing; the sequence is YEEQNQATTD…MWVKLKTILF (260 aa). Serine 441, serine 444, serine 467, and serine 479 each carry phosphoserine. Polar residues predominate over residues 443-454; that stretch reads HSHNGSPLTSKN. Disordered stretches follow at residues 443 to 485 and 500 to 580; these read HSHN…YNQR and SHGS…LAPG. Basic and acidic residues predominate over residues 561–570; the sequence is DSRHGEDEHQ. A phosphoserine mark is found at serine 612 and serine 615. The II repeat unit spans residues 647–911; it reads CCPMWVKLKT…EDDGEVNNLQ (265 aa). The chain crosses the membrane as a helical span at residues 660 to 684; the sequence is GLVTDPFAELTITLCIVVNTIFMAM. The Extracellular portion of the chain corresponds to 685-695; the sequence is EHHGMSPTFEA. Residues 696–719 traverse the membrane as a helical segment; sequence MLQIGNIVFTIFFTAEMVFKIIAF. The Cytoplasmic segment spans residues 720–727; it reads DPYYYFQK. Residues 728–747 traverse the membrane as a helical segment; that stretch reads KWNIFDCIIVTVSLLELGVA. At 748 to 753 the chain is on the extracellular side; sequence KKGSLS. A helical; Voltage-sensor transmembrane segment spans residues 754–773; that stretch reads VLRSFRLLRVFKLAKSWPTL. At 774–789 the chain is on the cytoplasmic side; it reads NTLIKIIGNSVGALGN. Residues 790 to 810 form a helical membrane-spanning segment; that stretch reads LTIILAIIVFVFALVGKQLLG. Residues 811 to 834 are Extracellular-facing; that stretch reads ENYRNNRKNISAPHEDWPRWHMHD. N-linked (GlcNAc...) asparagine glycosylation occurs at asparagine 819. Residues 835–855 constitute an intramembrane region (pore-forming); the sequence is FFHSFLIVFRILCGEWIENMW. Topologically, residues 856 to 864 are extracellular; the sequence is ACMEVGQKS. An intrachain disulfide couples cysteine 857 to cysteine 866. Residues 865–890 form a helical membrane-spanning segment; that stretch reads ICLILFLTVMVLGNLVVLNLFIALLL. The Cytoplasmic portion of the chain corresponds to 891–1147; that stretch reads NSFSADNLTA…GWQVRKTCYR (257 aa). Disordered regions lie at residues 963–986 and 1041–1089; these read AANT…EHSD and DHLT…GSTV. Residues 1140–1449 form an III repeat; the sequence is QVRKTCYRIV…KKYYNAMKKL (310 aa). Residues 1148–1171 form a helical membrane-spanning segment; that stretch reads IVEHSWFESFIIFMILLSSGSLAF. The Extracellular segment spans residues 1172 to 1184; that stretch reads EDYYLDQKPTVKA. A helical membrane pass occupies residues 1185-1210; the sequence is LLEYTDRVFTFIFVFEMLLKWVAYGF. The Cytoplasmic portion of the chain corresponds to 1211 to 1216; sequence KKYFTN. A helical membrane pass occupies residues 1217–1238; that stretch reads AWCWLDFLIVNISLISLTAKIL. The Extracellular segment spans residues 1239 to 1242; the sequence is EYSE. Residues 1243-1264 traverse the membrane as a helical; Voltage-sensor segment; sequence VAPIKALRTLRALRPLRALSRF. Residues 1265–1283 are Cytoplasmic-facing; it reads EGMRVVVDALVGAIPSIMN. A helical transmembrane segment spans residues 1284 to 1311; sequence VLLVCLIFWLIFSIMGVNLFAGKFWRCI. Asparagine 1312, asparagine 1328, and asparagine 1336 each carry an N-linked (GlcNAc...) asparagine glycan. Residues 1312 to 1353 are Extracellular-facing; sequence NYTDGEFSLVPLSIVNNKSDCKIQNSTGSFFWVNVKVNFDNV. The pore-forming intramembrane region spans 1354-1375; that stretch reads AMGYLALLQVATFKGWMDIMYA. Over 1376 to 1391 the chain is Extracellular; it reads AVDSREVNMQPKWEDN. Residues 1392 to 1418 traverse the membrane as a helical segment; that stretch reads VYMYLYFVIFIIFGGFFTLNLFVGVII. At 1419-1471 the chain is on the cytoplasmic side; the sequence is DNFNQQKKKLGGQDIFMTEEQKKYYNAMKKLGSKKPQKPIPRPLNKFQGFVFD. Residue serine 1451 is modified to Phosphoserine; by PKC. Residues 1458-1757 form an IV repeat; it reads IPRPLNKFQG…WEKFDPEATQ (300 aa). Residues 1472 to 1495 traverse the membrane as a helical segment; sequence IVTRQAFDITIMVLICLNMITMMV. Residues 1496-1506 are Extracellular-facing; it reads ETDDQSEEKTK. The helical transmembrane segment at 1507–1530 threads the bilayer; sequence ILGKINQFFVAVFTGECVMKMFAL. Topologically, residues 1531-1536 are cytoplasmic; the sequence is RQYYFT. A helical transmembrane segment spans residues 1537–1560; the sequence is NGWNVFDFIVVVLSIASLIFSAIL. Residues 1561-1572 are Extracellular-facing; it reads KSLQSYFSPTLF. Residues 1573–1594 traverse the membrane as a helical; Voltage-sensor segment; it reads RVIRLARIGRILRLIRAAKGIR. Residues 1595–1609 are Cytoplasmic-facing; sequence TLLFALMMSLPALFN. A helical membrane pass occupies residues 1610 to 1632; the sequence is IGLLLFLVMFIYSIFGMSSFPHV. At 1633-1646 the chain is on the extracellular side; it reads RWEAGIDDMFNFQT. Residues 1647 to 1669 constitute an intramembrane region (pore-forming); the sequence is FANSMLCLFQITTSAGWDGLLSP. The Extracellular segment spans residues 1670 to 1697; the sequence is ILNTGPPYCDPNLPNSNGTRGDCGSPAV. Residue asparagine 1686 is glycosylated (N-linked (GlcNAc...) asparagine). The chain crosses the membrane as a helical span at residues 1698–1722; that stretch reads GIIFFTTYIIISFLIMVNMYIAVIL. At 1723–1956 the chain is on the cytoplasmic side; sequence ENFNVATEES…TSMELIAPGP (234 aa). The IQ domain maps to 1851 to 1880; it reads EDISATVIQKAYRSYVLHRSMALSNTPCVP. The segment at 1909-1956 is disordered; the sequence is SETASATSFPPSYESVTRGLSDRVNMRTSSSIQNEDEATSMELIAPGP.

This sequence belongs to the sodium channel (TC 1.A.1.10) family. Nav1.8/SCN10A subfamily. In terms of assembly, the channel consists of an ion conducting pore forming alpha-subunit regulated by one or more associated auxiliary subunits SCN1B, SCN2B and SCN3B; electrophysiological properties may vary depending on the type of the associated beta subunits. Found in a number of complexes with PRX, DYNLT1 and PDZD2. Interacts with proteins such as FSTL1, PRX, DYNLT1, PDZD2, S100A10 and many others. Interacts with NEDD4 and NEDD4L. In terms of processing, ubiquitinated by NEDD4L; which promotes its endocytosis. Phosphorylation at Ser-1451 by PKC in a highly conserved cytoplasmic loop slows inactivation of the sodium channel and reduces peak sodium currents. Post-translationally, lacks the cysteine which covalently binds the conotoxin GVIIJ. This cysteine (position 816) is speculated in other sodium channel subunits alpha to be implied in covalent binding with the sodium channel subunit beta-2 or beta-4. Expressed in the dorsal root ganglia and sciatic nerve.

It localises to the cell membrane. It catalyses the reaction Na(+)(in) = Na(+)(out). Functionally, tetrodotoxin-resistant channel that mediates the voltage-dependent sodium ion permeability of excitable membranes. Assuming opened or closed conformations in response to the voltage difference across the membrane, the protein forms a sodium-selective channel through which sodium ions may pass in accordance with their electrochemical gradient. Plays a role in neuropathic pain mechanisms. The polypeptide is Sodium channel protein type 10 subunit alpha (Homo sapiens (Human)).